The following is a 298-amino-acid chain: ATP phosphoribosyltransferase (298 aa).

Belongs to the ATP phosphoribosyltransferase family. Long subfamily. Mg(2+) serves as cofactor.

It localises to the cytoplasm. It catalyses the reaction 1-(5-phospho-beta-D-ribosyl)-ATP + diphosphate = 5-phospho-alpha-D-ribose 1-diphosphate + ATP. The protein operates within amino-acid biosynthesis; L-histidine biosynthesis; L-histidine from 5-phospho-alpha-D-ribose 1-diphosphate: step 1/9. Feedback inhibited by histidine. Functionally, catalyzes the condensation of ATP and 5-phosphoribose 1-diphosphate to form N'-(5'-phosphoribosyl)-ATP (PR-ATP). Has a crucial role in the pathway because the rate of histidine biosynthesis seems to be controlled primarily by regulation of HisG enzymatic activity. In Vibrio vulnificus (strain CMCP6), this protein is ATP phosphoribosyltransferase.